Reading from the N-terminus, the 20-residue chain is Maximin-Hu (20 aa).

This sequence belongs to the bombinin family. As to expression, expressed by the skin glands.

Its subcellular location is the secreted. Functionally, has antimicrobial activity. The chain is Maximin-Hu from Bombina maxima (Giant fire-bellied toad).